The following is a 492-amino-acid chain: N-succinylglutamate 5-semialdehyde dehydrogenase (492 aa).

Residue 220–225 (GSANTG) coordinates NAD(+). Residues Glu243 and Cys277 contribute to the active site.

It belongs to the aldehyde dehydrogenase family. AstD subfamily.

It carries out the reaction N-succinyl-L-glutamate 5-semialdehyde + NAD(+) + H2O = N-succinyl-L-glutamate + NADH + 2 H(+). It functions in the pathway amino-acid degradation; L-arginine degradation via AST pathway; L-glutamate and succinate from L-arginine: step 4/5. Its function is as follows. Catalyzes the NAD-dependent reduction of succinylglutamate semialdehyde into succinylglutamate. In Escherichia coli O7:K1 (strain IAI39 / ExPEC), this protein is N-succinylglutamate 5-semialdehyde dehydrogenase.